An 89-amino-acid polypeptide reads, in one-letter code: Small ribosomal subunit protein uS15 (89 aa).

Belongs to the universal ribosomal protein uS15 family. In terms of assembly, part of the 30S ribosomal subunit. Forms a bridge to the 50S subunit in the 70S ribosome, contacting the 23S rRNA.

One of the primary rRNA binding proteins, it binds directly to 16S rRNA where it helps nucleate assembly of the platform of the 30S subunit by binding and bridging several RNA helices of the 16S rRNA. Functionally, forms an intersubunit bridge (bridge B4) with the 23S rRNA of the 50S subunit in the ribosome. The chain is Small ribosomal subunit protein uS15 from Agrobacterium fabrum (strain C58 / ATCC 33970) (Agrobacterium tumefaciens (strain C58)).